The sequence spans 228 residues: MVSTKFLNKLKNEYNIEFNNEKLLEEAFTHSSYSNEHPDDGIRDYEKLEFLGDAVLELAVSNYLYRHYPKLNEGELTRLRSNIVRTEGFSEFAIECGFQKEIHLGNGEEKAGARNRKTLLEDVFEAFNGALFLDQGMPAVERFLHLTVYPLIAKGEFDDSRDYKTDLQELLQQNGPVNIEYSVISESQLPSHFVVELKINDQVQTQGEGHNKKAAEQQAAKAALQKFE.

An RNase III domain is found at 7 to 136 (LNKLKNEYNI…FNGALFLDQG (130 aa)). Residue Glu49 coordinates Mg(2+). Asp53 is an active-site residue. Mg(2+) is bound by residues Asp122 and Glu125. Glu125 is an active-site residue. Positions 162–228 (DYKTDLQELL…AAKAALQKFE (67 aa)) constitute a DRBM domain. The disordered stretch occupies residues 207-228 (GEGHNKKAAEQQAAKAALQKFE). The span at 216–228 (EQQAAKAALQKFE) shows a compositional bias: low complexity.

Belongs to the ribonuclease III family. In terms of assembly, homodimer. It depends on Mg(2+) as a cofactor.

It is found in the cytoplasm. It carries out the reaction Endonucleolytic cleavage to 5'-phosphomonoester.. Digests double-stranded RNA. Involved in the processing of primary rRNA transcript to yield the immediate precursors to the large and small rRNAs (23S and 16S). Processes some mRNAs, and tRNAs when they are encoded in the rRNA operon. Processes pre-crRNA and tracrRNA of type II CRISPR loci if present in the organism. The polypeptide is Ribonuclease 3 (Lactobacillus acidophilus (strain ATCC 700396 / NCK56 / N2 / NCFM)).